The primary structure comprises 402 residues: S-adenosylmethionine synthase (402 aa).

H16 contacts ATP. Position 18 (D18) interacts with Mg(2+). E44 contacts K(+). The L-methionine site is built by E57 and Q103. Residues 103–113 (QSPDIAQGVDT) form a flexible loop region. ATP is bound by residues 178-180 (DGK), 249-250 (KF), D258, 264-265 (RK), A281, and K285. D258 provides a ligand contact to L-methionine. Residue K289 coordinates L-methionine.

This sequence belongs to the AdoMet synthase family. As to quaternary structure, homotetramer; dimer of dimers. The cofactor is Mg(2+). K(+) is required as a cofactor.

It localises to the cytoplasm. It catalyses the reaction L-methionine + ATP + H2O = S-adenosyl-L-methionine + phosphate + diphosphate. The protein operates within amino-acid biosynthesis; S-adenosyl-L-methionine biosynthesis; S-adenosyl-L-methionine from L-methionine: step 1/1. In terms of biological role, catalyzes the formation of S-adenosylmethionine (AdoMet) from methionine and ATP. The overall synthetic reaction is composed of two sequential steps, AdoMet formation and the subsequent tripolyphosphate hydrolysis which occurs prior to release of AdoMet from the enzyme. The sequence is that of S-adenosylmethionine synthase from Mycolicibacterium vanbaalenii (strain DSM 7251 / JCM 13017 / BCRC 16820 / KCTC 9966 / NRRL B-24157 / PYR-1) (Mycobacterium vanbaalenii).